Here is a 105-residue protein sequence, read N- to C-terminus: Large ribosomal subunit protein uL24 (105 aa).

This sequence belongs to the universal ribosomal protein uL24 family. Part of the 50S ribosomal subunit.

Its function is as follows. One of two assembly initiator proteins, it binds directly to the 5'-end of the 23S rRNA, where it nucleates assembly of the 50S subunit. One of the proteins that surrounds the polypeptide exit tunnel on the outside of the subunit. This chain is Large ribosomal subunit protein uL24, found in Psychrobacter cryohalolentis (strain ATCC BAA-1226 / DSM 17306 / VKM B-2378 / K5).